The following is a 339-amino-acid chain: DNA-directed RNA polymerase subunit alpha (339 aa).

Residues 1-233 form an alpha N-terminal domain (alpha-NTD) region; the sequence is MVREEVAGST…DLFLPFLHAE (233 aa). Positions 264-339 are alpha C-terminal domain (alpha-CTD); that stretch reads KKGIPLNCIF…IDLLKNKLSF (76 aa).

This sequence belongs to the RNA polymerase alpha chain family. In plastids the minimal PEP RNA polymerase catalytic core is composed of four subunits: alpha, beta, beta', and beta''. When a (nuclear-encoded) sigma factor is associated with the core the holoenzyme is formed, which can initiate transcription.

The protein resides in the plastid. Its subcellular location is the chloroplast. The catalysed reaction is RNA(n) + a ribonucleoside 5'-triphosphate = RNA(n+1) + diphosphate. DNA-dependent RNA polymerase catalyzes the transcription of DNA into RNA using the four ribonucleoside triphosphates as substrates. The chain is DNA-directed RNA polymerase subunit alpha from Elymus hystrix (Eastern bottlebrush grass).